The sequence spans 302 residues: Putative peptide permease protein BMEII0861 (302 aa).

The disordered stretch occupies residues 1–22 (MRSSIHASRLRKMGQSIPASTG). A run of 5 helical transmembrane segments spans residues 38–58 (IFGLVLLTPLLFAVLTYPLWL), 101–121 (LLVAVSSVVLSTAIGFLIGAI), 147–167 (IFLLVLASIIGSGIWSTVVVI), 230–250 (ILLEAGLSFLGLGVPPPAASW), and 268–288 (WQWLFPGGALVLAVLAINFIG). An ABC transmembrane type-1 domain is found at 97–288 (GRISLLVAVS…LAVLAINFIG (192 aa)).

Belongs to the binding-protein-dependent transport system permease family. In terms of assembly, the complex is composed of two ATP-binding proteins (BMEII0863 and BMEII0864), two transmembrane proteins (BMEII0860 and BMEII0861) and a solute-binding protein (BMEII0859).

Its subcellular location is the cell inner membrane. Probably part of an ABC transporter complex that could be involved in peptide import. Probably responsible for the translocation of the substrate across the membrane. The polypeptide is Putative peptide permease protein BMEII0861 (Brucella melitensis biotype 1 (strain ATCC 23456 / CCUG 17765 / NCTC 10094 / 16M)).